Here is a 231-residue protein sequence, read N- to C-terminus: MAKVAKRIQKIREGVDPNKLYVLTDAISMVKERAVAKFDETVEVSMNLGVDPRHADQMVRGVVNLPNGTGRDVRVAVFARGVKADEATAAGADVVGAEELVEIVQGGKIDFDRCIATPDMMPLVGRLGKVLGPRGMMPNPKVGTVTMDVAGAVKASKGGAVEFRVEKAGIVHAGIGKASFDAKALEENIKAFADAVIKAKPTGAKGNYVKRVAISSTMGPGVKIEPSSVTA.

Belongs to the universal ribosomal protein uL1 family. Part of the 50S ribosomal subunit.

Functionally, binds directly to 23S rRNA. The L1 stalk is quite mobile in the ribosome, and is involved in E site tRNA release. In terms of biological role, protein L1 is also a translational repressor protein, it controls the translation of the L11 operon by binding to its mRNA. The sequence is that of Large ribosomal subunit protein uL1 from Agrobacterium fabrum (strain C58 / ATCC 33970) (Agrobacterium tumefaciens (strain C58)).